We begin with the raw amino-acid sequence, 208 residues long: High frequency lysogenization protein HflD homolog (208 aa).

It belongs to the HflD family.

It localises to the cytoplasm. It is found in the cell inner membrane. This is High frequency lysogenization protein HflD homolog from Yersinia pestis bv. Antiqua (strain Nepal516).